Reading from the N-terminus, the 365-residue chain is Carboxynorspermidine/carboxyspermidine decarboxylase (365 aa).

Lysine 37 bears the N6-(pyridoxal phosphate)lysine mark. The substrate site is built by glutamate 233 and aspartate 269.

The protein belongs to the Orn/Lys/Arg decarboxylase class-II family. NspC subfamily. Homodimer. The cofactor is pyridoxal 5'-phosphate.

It is found in the cytoplasm. The catalysed reaction is carboxynorspermidine + H(+) = norspermidine + CO2. The enzyme catalyses carboxyspermidine + H(+) = spermidine + CO2. In terms of biological role, catalyzes the decarboxylation of carboxynorspermidine and carboxyspermidine. This chain is Carboxynorspermidine/carboxyspermidine decarboxylase, found in Herminiimonas arsenicoxydans.